A 426-amino-acid chain; its full sequence is Putative F-box/LRR-repeat protein At4g15060 (426 aa).

An F-box domain is found at 25-71; sequence MDKISRLPDDLLVKVLLFLPTKIAVSTSILSKRWEFLWMWLPKLEYH. 9 LRR repeats span residues 50 to 75, 80 to 106, 160 to 187, 188 to 213, 221 to 259, 265 to 290, 311 to 337, 338 to 363, and 373 to 399; these read STSI…NTNY, EQRL…RLKF, ILKL…LLKR, VTYK…VVER, TLSI…KLTD, ETEL…HIDS, CVKV…KLCP, CDSN…EIKL, and DPAC…TWTW.

In Arabidopsis thaliana (Mouse-ear cress), this protein is Putative F-box/LRR-repeat protein At4g15060.